A 1079-amino-acid polypeptide reads, in one-letter code: Error-prone DNA polymerase (1079 aa).

This sequence belongs to the DNA polymerase type-C family. DnaE2 subfamily.

The protein resides in the cytoplasm. The catalysed reaction is DNA(n) + a 2'-deoxyribonucleoside 5'-triphosphate = DNA(n+1) + diphosphate. Its function is as follows. DNA polymerase involved in damage-induced mutagenesis and translesion synthesis (TLS). It is not the major replicative DNA polymerase. The protein is Error-prone DNA polymerase of Ralstonia pickettii (strain 12J).